The following is a 323-amino-acid chain: tRNA dimethylallyltransferase (323 aa).

An ATP-binding site is contributed by 12–19 (GPTAAGKT). Position 14-19 (14-19 (TAAGKT)) interacts with substrate. 2 interaction with substrate tRNA regions span residues 37 to 40 (DSAL) and 161 to 165 (QRLIR).

This sequence belongs to the IPP transferase family. As to quaternary structure, monomer. Requires Mg(2+) as cofactor.

The catalysed reaction is adenosine(37) in tRNA + dimethylallyl diphosphate = N(6)-dimethylallyladenosine(37) in tRNA + diphosphate. Catalyzes the transfer of a dimethylallyl group onto the adenine at position 37 in tRNAs that read codons beginning with uridine, leading to the formation of N6-(dimethylallyl)adenosine (i(6)A). The protein is tRNA dimethylallyltransferase of Pseudomonas entomophila (strain L48).